A 241-amino-acid chain; its full sequence is Ribonuclease PH (241 aa).

Residues R87 and 125-127 (GTR) each bind phosphate.

It belongs to the RNase PH family. In terms of assembly, homohexameric ring arranged as a trimer of dimers.

The enzyme catalyses tRNA(n+1) + phosphate = tRNA(n) + a ribonucleoside 5'-diphosphate. In terms of biological role, phosphorolytic 3'-5' exoribonuclease that plays an important role in tRNA 3'-end maturation. Removes nucleotide residues following the 3'-CCA terminus of tRNAs; can also add nucleotides to the ends of RNA molecules by using nucleoside diphosphates as substrates, but this may not be physiologically important. Probably plays a role in initiation of 16S rRNA degradation (leading to ribosome degradation) during starvation. In Salinispora tropica (strain ATCC BAA-916 / DSM 44818 / JCM 13857 / NBRC 105044 / CNB-440), this protein is Ribonuclease PH.